Here is a 180-residue protein sequence, read N- to C-terminus: MGNQHSLLNKEQLEQMKDNSSFSEAELKKLYRRFQMLDKDGSGTLTTDEFLSIPDLALNPLLERVIQIFDQNKDNEIEFFEFVGTLATLSHKGTKEDKLKFLFQIYDIDCDGFISNGELFQVLKMMVGTNLNDVQLQQIVDKTIIEGDYDKDGKISFDEFIHMIGNQEGIEEKLSVNWSE.

Glycine 2 carries N-myristoyl glycine lipidation. EF-hand domains lie at 25–60, 62–92, 94–129, and 135–170; these read AELKKLYRRFQMLDKDGSGTLTTDEFLSIPDLALNP, LERVIQIFDQNKDNEIEFFEFVGTLATLSHK, TKEDKLKFLFQIYDIDCDGFISNGELFQVLKMMVGT, and QLQQIVDKTIIEGDYDKDGKISFDEFIHMIGNQEGI. Residues aspartate 38, aspartate 40, serine 42, threonine 44, glutamate 49, aspartate 70, asparagine 72, aspartate 74, glutamate 76, glutamate 81, aspartate 107, aspartate 109, aspartate 111, and glutamate 118 each contribute to the Ca(2+) site. Positions 138–143 are canA/calcineurin A binding; sequence QIVDKT. Ca(2+)-binding residues include aspartate 148, aspartate 150, aspartate 152, lysine 154, and glutamate 159.

This sequence belongs to the calcineurin regulatory subunit family. Forms a complex composed of a calmodulin-dependent catalytic subunit canA (also known as calcineurin A) and a regulatory Ca(2+)-binding subunit cnbA (also known as calcineurin B).

In terms of biological role, regulatory subunit of calcineurin, a calcium-dependent, calmodulin stimulated protein phosphatase. Confers calcium sensitivity. Important for stalk formation. The chain is Calcineurin subunit B type 1 (cnbA) from Dictyostelium discoideum (Social amoeba).